Consider the following 195-residue polypeptide: Putative lysine exporter (195 aa).

Helical transmembrane passes span 4–24, 30–50, 61–81, 86–106, 117–137, and 170–190; these read LLSA…WLHF, LYVL…NGIS, LMMG…SAFF, ITQG…SVVL, IAFF…PLFM, and PIAI…LVFF.

It belongs to the LysO family.

It is found in the cell inner membrane. In terms of biological role, mediates export of lysine. The protein is Putative lysine exporter of Haemophilus influenzae (strain ATCC 51907 / DSM 11121 / KW20 / Rd).